Here is a 126-residue protein sequence, read N- to C-terminus: Large ribosomal subunit protein bL12c (126 aa).

It belongs to the bacterial ribosomal protein bL12 family. In terms of assembly, homodimer. Part of the ribosomal stalk of the 50S ribosomal subunit. Forms a multimeric L10(L12)X complex, where L10 forms an elongated spine to which 2 to 4 L12 dimers bind in a sequential fashion. Binds GTP-bound translation factors.

The protein localises to the plastid. The protein resides in the cyanelle. Forms part of the ribosomal stalk which helps the ribosome interact with GTP-bound translation factors. Is thus essential for accurate translation. The protein is Large ribosomal subunit protein bL12c of Cyanophora paradoxa.